We begin with the raw amino-acid sequence, 391 residues long: Elongation factor Tu 1 (391 aa).

Positions 10-201 constitute a tr-type G domain; it reads KPHVNIGTIG…EVDNYIPTPE (192 aa). Residues 19 to 26 form a G1 region; that stretch reads GHVDHGKT. 19 to 26 contacts GTP; it reads GHVDHGKT. A Mg(2+)-binding site is contributed by Thr26. The interval 55–59 is G2; the sequence is GITIS. The G3 stretch occupies residues 76 to 79; that stretch reads DCPG. Residues 76–80 and 131–134 each bind GTP; these read DCPGH and NKVD. A G4 region spans residues 131 to 134; sequence NKVD. The interval 169–171 is G5; the sequence is SAL.

This sequence belongs to the TRAFAC class translation factor GTPase superfamily. Classic translation factor GTPase family. EF-Tu/EF-1A subfamily. As to quaternary structure, monomer.

It is found in the cytoplasm. The catalysed reaction is GTP + H2O = GDP + phosphate + H(+). GTP hydrolase that promotes the GTP-dependent binding of aminoacyl-tRNA to the A-site of ribosomes during protein biosynthesis. The protein is Elongation factor Tu 1 of Bartonella quintana (strain Toulouse) (Rochalimaea quintana).